Consider the following 554-residue polypeptide: MIYPKIALAQSIIEICSAKGIYNIIISPGSRNAPLTIGFAQNPNFKCYSIADERCAAFFALGIAQQTQKPAAVVCTSGSALLNYYPAVAEAFYSQIPLIVISADRPQSKIDIGDGQTIRQENVFLNHSVFNANLTEDASVENDLKINKAIETAILQKGPVHINAPFEEPLYQTVSELSVEPKITNLEEFLETKIIENEDEIVSIWNSSKRKLILIGGINEANSIDDAVLENFAKDPSIVVLTETTSNLHHPSFINSIDSLITPFDDSDFKELEPEVLITFGGMIVSKRIKAFLRKYKPVHHWHIDTLRAYDTFNALSKHFVMEPNDFFKNLLPKTEFVTSKYFSKIDKIYDLRKIKKKQYLSKIGFSDFKVFEKVIESLPKNSQLQISNSSAIRYAQLIEIDPSIEVFCNRGTSGIDGSTSTAVGAAVGSGKPNVFITGDISFLYDSNALWNSYIPKNFKIILINNGGGGIFRILPGHQEKPVFNTYFETSHHLTAEHLAKMYQCSYFKADDLSSLNENLELLYNSNEAPGILEVFTPTFENDVILKQYFKELT.

This sequence belongs to the TPP enzyme family. MenD subfamily. In terms of assembly, homodimer. Mg(2+) is required as a cofactor. It depends on Mn(2+) as a cofactor. Requires thiamine diphosphate as cofactor.

The enzyme catalyses isochorismate + 2-oxoglutarate + H(+) = 5-enolpyruvoyl-6-hydroxy-2-succinyl-cyclohex-3-ene-1-carboxylate + CO2. The protein operates within quinol/quinone metabolism; 1,4-dihydroxy-2-naphthoate biosynthesis; 1,4-dihydroxy-2-naphthoate from chorismate: step 2/7. It functions in the pathway quinol/quinone metabolism; menaquinone biosynthesis. In terms of biological role, catalyzes the thiamine diphosphate-dependent decarboxylation of 2-oxoglutarate and the subsequent addition of the resulting succinic semialdehyde-thiamine pyrophosphate anion to isochorismate to yield 2-succinyl-5-enolpyruvyl-6-hydroxy-3-cyclohexene-1-carboxylate (SEPHCHC). The polypeptide is 2-succinyl-5-enolpyruvyl-6-hydroxy-3-cyclohexene-1-carboxylate synthase (Flavobacterium johnsoniae (strain ATCC 17061 / DSM 2064 / JCM 8514 / BCRC 14874 / CCUG 350202 / NBRC 14942 / NCIMB 11054 / UW101) (Cytophaga johnsonae)).